A 334-amino-acid polypeptide reads, in one-letter code: Petrobactin import system permease protein FatD (334 aa).

Helical transmembrane passes span 24–44, 64–84, 98–118, 119–139, 152–172, 197–217, 234–254, 277–297, and 304–324; these read FIIAIIVVIILGIISLFTGVY, TVALMLTGAAMAMAGLVMQLI, IEWSSLGLLFVYLLFPAPTLV, QRMTGAIIFSFIGTMIFFLFL, IIGLMLGAVISAVSTFLGLLF, LWLIVIVTLLIFMYANRLTLA, IVLFGTALISVAVGIVAAVIG, SNLPWVCVIGMGTITACDIIS, and FELPVSLILASVGAVVFITIL.

The protein belongs to the binding-protein-dependent transport system permease family. FecCD subfamily. In terms of assembly, the complex is composed of two ATP-binding proteins (FatE), two transmembrane proteins (FatC and FatD) and a solute-binding protein (FpuA).

It is found in the cell membrane. Part of an ABC transporter complex involved in ferric-petrobactin uptake. Probably responsible for the translocation of the substrate across the membrane. This chain is Petrobactin import system permease protein FatD, found in Bacillus anthracis.